A 295-amino-acid chain; its full sequence is Bifunctional protein FolD (295 aa).

NADP(+) contacts are provided by residues 166 to 168 (GRS), Ser-195, and Ile-236.

The protein belongs to the tetrahydrofolate dehydrogenase/cyclohydrolase family. In terms of assembly, homodimer.

It catalyses the reaction (6R)-5,10-methylene-5,6,7,8-tetrahydrofolate + NADP(+) = (6R)-5,10-methenyltetrahydrofolate + NADPH. The catalysed reaction is (6R)-5,10-methenyltetrahydrofolate + H2O = (6R)-10-formyltetrahydrofolate + H(+). The protein operates within one-carbon metabolism; tetrahydrofolate interconversion. Catalyzes the oxidation of 5,10-methylenetetrahydrofolate to 5,10-methenyltetrahydrofolate and then the hydrolysis of 5,10-methenyltetrahydrofolate to 10-formyltetrahydrofolate. The sequence is that of Bifunctional protein FolD from Pelodictyon phaeoclathratiforme (strain DSM 5477 / BU-1).